A 235-amino-acid polypeptide reads, in one-letter code: Urease accessory protein UreF (235 aa).

Belongs to the UreF family. In terms of assembly, ureD, UreF and UreG form a complex that acts as a GTP-hydrolysis-dependent molecular chaperone, activating the urease apoprotein by helping to assemble the nickel containing metallocenter of UreC. The UreE protein probably delivers the nickel.

It is found in the cytoplasm. Functionally, required for maturation of urease via the functional incorporation of the urease nickel metallocenter. This chain is Urease accessory protein UreF, found in Haemophilus influenzae (strain PittGG).